A 77-amino-acid polypeptide reads, in one-letter code: Putative sulfur carrier protein AF_0188 (77 aa).

C11 serves as the catalytic Cysteine persulfide intermediate.

It belongs to the sulfur carrier protein TusA family.

The chain is Putative sulfur carrier protein AF_0188 from Archaeoglobus fulgidus (strain ATCC 49558 / DSM 4304 / JCM 9628 / NBRC 100126 / VC-16).